Reading from the N-terminus, the 183-residue chain is ATP synthase subunit delta, chloroplastic (183 aa).

It belongs to the ATPase delta chain family. F-type ATPases have 2 components, F(1) - the catalytic core - and F(0) - the membrane proton channel. F(1) has five subunits: alpha(3), beta(3), gamma(1), delta(1), epsilon(1). CF(0) has four main subunits: a(1), b(1), b'(1) and c(10-14). The alpha and beta chains form an alternating ring which encloses part of the gamma chain. F(1) is attached to F(0) by a central stalk formed by the gamma and epsilon chains, while a peripheral stalk is formed by the delta, b and b' chains.

It is found in the plastid. The protein resides in the chloroplast thylakoid membrane. F(1)F(0) ATP synthase produces ATP from ADP in the presence of a proton or sodium gradient. F-type ATPases consist of two structural domains, F(1) containing the extramembraneous catalytic core and F(0) containing the membrane proton channel, linked together by a central stalk and a peripheral stalk. During catalysis, ATP synthesis in the catalytic domain of F(1) is coupled via a rotary mechanism of the central stalk subunits to proton translocation. Its function is as follows. This protein is part of the stalk that links CF(0) to CF(1). It either transmits conformational changes from CF(0) to CF(1) or is implicated in proton conduction. In Cyanidium caldarium (Red alga), this protein is ATP synthase subunit delta, chloroplastic.